The primary structure comprises 392 residues: Speckle-type POZ protein-like (392 aa).

The MATH domain occupies Lys31 to Val161. The 68-residue stretch at Thr200 to Asp267 folds into the BTB domain.

This sequence belongs to the Tdpoz family. In terms of assembly, homodimer. Heterodimer with SPOP. Component of cullin-RING-based BCR (BTB-CUL3-RBX1) E3 ubiquitin-protein ligase complexes containing homodimeric SPOPL or the heterodimer formed by SPOP and SPOPL. Interacts with CUL3 and MACROH2A1.

The protein resides in the nucleus. It functions in the pathway protein modification; protein ubiquitination. In terms of biological role, component of a cullin-RING-based BCR (BTB-CUL3-RBX1) E3 ubiquitin-protein ligase complex that mediates the ubiquitination and subsequent proteasomal degradation of target proteins, but with relatively low efficiency. Cullin-RING-based BCR (BTB-CUL3-RBX1) E3 ubiquitin-protein ligase complexes containing homodimeric SPOPL or the heterodimer formed by SPOP and SPOPL are less efficient than ubiquitin ligase complexes containing only SPOP. May function to down-regulate the activity of cullin-RING-based BCR (BTB-CUL3-RBX1) E3 ubiquitin-protein ligase complexes that contain SPOP. The polypeptide is Speckle-type POZ protein-like (Spopl) (Mus musculus (Mouse)).